The primary structure comprises 224 residues: Protein YiiM (224 aa).

One can recognise an MOSC domain in the interval 26–163 (IQVDGELMLT…VSADAPLELV (138 aa)).

Monomer.

In Escherichia coli (strain K12), this protein is Protein YiiM (yiiM).